The primary structure comprises 655 residues: FYVE, RhoGEF and PH domain-containing protein 2 (655 aa).

S10, S39, and S47 each carry phosphoserine. Disordered stretches follow at residues 21–52 (NRTP…EPWE) and 84–103 (WRRS…EPEE). The segment covering 32–41 (SLEDQPHSPE) has biased composition (basic and acidic residues). In terms of domain architecture, DH spans 102-290 (EEKRVVRELL…FSAAQHSNAA (189 aa)). A PH 1 domain is found at 319-418 (TLLREGPVLK…WMQACQAAID (100 aa)). The segment at 458–518 (DKMVTMCMRC…VCLTCYTFLT (61 aa)) adopts an FYVE-type zinc-finger fold. 8 residues coordinate Zn(2+): C464, C467, C481, C484, C489, C492, C510, and C513. One can recognise a PH 2 domain in the interval 544–641 (QSLVCSFLQL…WVTAIKRAAS (98 aa)). T644 carries the post-translational modification Phosphothreonine. A Phosphoserine modification is found at S654.

In terms of tissue distribution, lymph node, spleen, B-lymphocytes and macrophages (at protein level). Expressed at high levels in lymph node, spleen, B-lymphocytes and bone marrow macrophages. Expressed at lower levels in mature bone marrow dendritic cells. In both immature and mature B-cells, expression is down-regulated by prior B-cell receptor signaling. Expression remains high in resting B and memory cells but declines upon differentiation into plasma cells.

It localises to the cytoplasm. The protein localises to the nucleus. It is found in the early endosome. Its subcellular location is the early endosome membrane. The protein resides in the cell projection. It localises to the ruffle membrane. The protein localises to the cytoskeleton. Activates CDC42, a member of the Ras-like family of Rho- and Rac proteins, by exchanging bound GDP for free GTP. Activates JNK1 via CDC42 but not RAC1. Binds to phosphatidylinositol 4,5-bisphosphate, phosphatidylinositol 3,4,5-trisphosphate, phosphatidylinositol 5-monophosphate, phosphatidylinositol 4-monophosphate and phosphatidylinositol 3-monophosphate. The chain is FYVE, RhoGEF and PH domain-containing protein 2 (Fgd2) from Mus musculus (Mouse).